Here is a 256-residue protein sequence, read N- to C-terminus: Thiazole synthase (256 aa).

K95 serves as the catalytic Schiff-base intermediate with DXP. 1-deoxy-D-xylulose 5-phosphate is bound by residues G156, 183 to 184 (AG), and 205 to 206 (NT).

It belongs to the ThiG family. As to quaternary structure, homotetramer. Forms heterodimers with either ThiH or ThiS.

The protein resides in the cytoplasm. It catalyses the reaction [ThiS sulfur-carrier protein]-C-terminal-Gly-aminoethanethioate + 2-iminoacetate + 1-deoxy-D-xylulose 5-phosphate = [ThiS sulfur-carrier protein]-C-terminal Gly-Gly + 2-[(2R,5Z)-2-carboxy-4-methylthiazol-5(2H)-ylidene]ethyl phosphate + 2 H2O + H(+). It functions in the pathway cofactor biosynthesis; thiamine diphosphate biosynthesis. Catalyzes the rearrangement of 1-deoxy-D-xylulose 5-phosphate (DXP) to produce the thiazole phosphate moiety of thiamine. Sulfur is provided by the thiocarboxylate moiety of the carrier protein ThiS. In vitro, sulfur can be provided by H(2)S. This is Thiazole synthase from Gluconacetobacter diazotrophicus (strain ATCC 49037 / DSM 5601 / CCUG 37298 / CIP 103539 / LMG 7603 / PAl5).